A 342-amino-acid polypeptide reads, in one-letter code: Isopentenyl-diphosphate delta-isomerase (342 aa).

11–12 provides a ligand contact to substrate; sequence RK. FMN is bound by residues Ser-68, 69–71, Ser-99, and Asn-128; that span reads SMT. 99–101 contacts substrate; the sequence is SQR. Residue Gln-162 coordinates substrate. Glu-163 serves as a coordination point for Mg(2+). Residues Lys-194, Ser-219, Thr-224, 275–277, and 296–297 contribute to the FMN site; these read GVR and AK.

The protein belongs to the IPP isomerase type 2 family. In terms of assembly, homooctamer. Dimer of tetramers. The cofactor is FMN. Requires NADPH as cofactor. Mg(2+) is required as a cofactor.

It is found in the cytoplasm. The catalysed reaction is isopentenyl diphosphate = dimethylallyl diphosphate. In terms of biological role, involved in the biosynthesis of isoprenoids. Catalyzes the 1,3-allylic rearrangement of the homoallylic substrate isopentenyl (IPP) to its allylic isomer, dimethylallyl diphosphate (DMAPP). The chain is Isopentenyl-diphosphate delta-isomerase from Legionella pneumophila subsp. pneumophila (strain Philadelphia 1 / ATCC 33152 / DSM 7513).